Reading from the N-terminus, the 232-residue chain is uncharacterized protein (232 aa).

It localises to the cytoplasm. The protein localises to the nucleus. This is an uncharacterized protein from Saccharomyces cerevisiae (strain ATCC 204508 / S288c) (Baker's yeast).